Here is a 202-residue protein sequence, read N- to C-terminus: Small ribosomal subunit protein uS4c (202 aa).

The disordered stretch occupies residues 18–45 (LPGLTRKMAKRKSPPGQHGAASKKPSQY). The S4 RNA-binding domain occupies 90-152 (MRLDTTIFRL…SRSRKLIEGY (63 aa)).

This sequence belongs to the universal ribosomal protein uS4 family. Part of the 30S ribosomal subunit. Contacts protein S5. The interaction surface between S4 and S5 is involved in control of translational fidelity.

Its subcellular location is the plastid. The protein localises to the chloroplast. Functionally, one of the primary rRNA binding proteins, it binds directly to 16S rRNA where it nucleates assembly of the body of the 30S subunit. Its function is as follows. With S5 and S12 plays an important role in translational accuracy. This is Small ribosomal subunit protein uS4c (rps4) from Nephroselmis olivacea (Green alga).